Here is a 444-residue protein sequence, read N- to C-terminus: Putative zinc metalloprotease XF_1047 (444 aa).

H22 contacts Zn(2+). The active site involves E23. H26 is a binding site for Zn(2+). The chain crosses the membrane as a helical span at residues 98-120 (IAIVAAGPLANLLLCMLLLWVLF). The region spanning 192-276 (TLELSKLKQP…DGHPGMIEIR (85 aa)) is the PDZ domain. 2 consecutive transmembrane segments (helical) span residues 371–393 (VGWF…LFPI) and 418–440 (AMAA…AFYN).

The protein belongs to the peptidase M50B family. It depends on Zn(2+) as a cofactor.

Its subcellular location is the cell inner membrane. This is Putative zinc metalloprotease XF_1047 from Xylella fastidiosa (strain 9a5c).